Consider the following 127-residue polypeptide: uncharacterized protein (127 aa).

Residues 1 to 23 form the signal peptide; the sequence is MAGVRARAPLPLALLLSLPAAPG. The disordered stretch occupies residues 43–127; the sequence is CFEVGLRKPP…ACPPRAPLWR (85 aa). A compositionally biased stretch (low complexity) spans 59–70; that stretch reads PPSFSSGSSRPL.

It is found in the secreted. This is an uncharacterized protein from Homo sapiens (Human).